Reading from the N-terminus, the 634-residue chain is Growth hormone receptor (634 aa).

A signal peptide spans 1-18 (MDLWQLLLTLAVAGSSDA). Over 19 to 260 (FSGSEATPAF…NPSACEEDFQ (242 aa)) the chain is Extracellular. N-linked (GlcNAc...) asparagine glycosylation is present at Asn-46. A disulfide bridge connects residues Cys-56 and Cys-66. Asn-73 carries N-linked (GlcNAc...) asparagine glycosylation. Cys-97 and Cys-108 are joined by a disulfide. Asn-111 is a glycosylation site (N-linked (GlcNAc...) asparagine). Cys-122 and Cys-136 form a disulfide bridge. In terms of domain architecture, Fibronectin type-III spans 147–250 (PPVGLNWTLL…EVLLITFPQM (104 aa)). N-linked (GlcNAc...) asparagine glycans are attached at residues Asn-152, Asn-157, and Asn-196. The short motif at 236–240 (YGKFS) is the WSXWS motif element. The chain crosses the membrane as a helical span at residues 261–284 (FPWFLIIIFGILGLTVTLFLLIFS). Over 285-634 (KQQRIKMLIL…STDQLNKIMP (350 aa)) the chain is Cytoplasmic. The segment at 290 to 375 (KMLILPPVPV…HEKSLSIFGA (86 aa)) is required for JAK2 binding. The Box 1 motif motif lies at 293–301 (ILPPVPVPK). The short motif at 336–345 (DSWVEFIELD) is the UbE motif element. Ser-337 is subject to Phosphoserine. The tract at residues 451-471 (KPRPLPIGGTESTHQAVHTQL) is disordered. A compositionally biased stretch (polar residues) spans 460 to 471 (TESTHQAVHTQL). A phosphotyrosine mark is found at Tyr-483 and Tyr-591.

It belongs to the type I cytokine receptor family. Type 1 subfamily. As to quaternary structure, on growth hormone (GH) binding, forms homodimers and binds JAK2 via a box 1-containing domain. Post-translationally, the soluble form (GHBP) is produced by phorbol ester-promoted proteolytic cleavage at the cell surface (shedding) by ADAM17/TACE. Shedding is inhibited by growth hormone (GH) binding to the receptor probably due to a conformational change in GHR rendering the receptor inaccessible to ADAM17. In terms of processing, on GH binding, phosphorylated on tyrosine residues in the cytoplasmic domain by JAK2. Ubiquitinated by the ECS(SOCS2) complex following ligand-binding and phosphorylation by JAK2, leading to its degradation by the proteasome. Regulation by the ECS(SOCS2) complex acts as a negative feedback loop of growth hormone receptor signaling. Ubiquitination is not sufficient for GHR internalization.

The protein resides in the cell membrane. Its subcellular location is the secreted. In terms of biological role, receptor for pituitary gland growth hormone (GH1) involved in regulating postnatal body growth. On ligand binding, couples to the JAK2/STAT5 pathway. Functionally, the soluble form (GHBP) acts as a reservoir of growth hormone in plasma and may be a modulator/inhibitor of GH signaling. The protein is Growth hormone receptor (GHR) of Ovis aries (Sheep).